Consider the following 555-residue polypeptide: Tetracycline 7-halogenase (555 aa).

22–27 (GSGLSG) contacts FAD.

The protein belongs to the flavin-dependent halogenase family. Bacterial tryptophan halogenase subfamily. As to quaternary structure, homodimer.

The catalysed reaction is tetracycline + FADH2 + chloride + O2 = 7-chlorotetracycline + FAD + 2 H2O + H(+). Its pathway is antibiotic biosynthesis. Its function is as follows. Involved in the biosynthesis of chlorotetracycline (CTC), an important member from antibiotics tetracycline (TC) family, which inhibits protein synthesis in bacteria and is widely involved in clinical therapy, animal feeds and aquaculture. Utilizes FADH(2) supplied by the flavin reductase CtcQ, to catalyze the chlorination of tetracycline (TC) at C7 position, leading to the production of 7-chlorotetracycline. The enzyme forms a lysine chloramine intermediate on an internal lysine residue before transferring the chlorine to the substrate. It is stereo-selective for the 4S (natural) isomer of tetracycline. This chain is Tetracycline 7-halogenase, found in Kitasatospora aureofaciens (Streptomyces aureofaciens).